Consider the following 64-residue polypeptide: U-poneritoxin(01)-Om1a (64 aa).

The N-terminal stretch at 1 to 27 (MKPSGLTFAFLVVFMMAIMYNSVQVTA) is a signal peptide. Residues 28 to 45 (DADADAEAEALANALAEA) constitute a propeptide that is removed on maturation. Residue Met-62 is modified to Methionine amide.

In terms of processing, truncated sequences of this peptide have also been found in the venom. It is possible they have been cleaved in the venom. Expressed by the venom gland.

It localises to the secreted. Functionally, antimicrobial peptide with activities against E.coli (MIC=1.3 uM), S.aureus (MIC=3.1 uM), and S.cerevisiae (MIC=50 uM). Also shows histamine-releasing activity (32.9% at 10 uM). Does not show hemolytic activity, even at 50 uM. It is a short peptide for which no alpha-helical region has been predicted. The polypeptide is U-poneritoxin(01)-Om1a (Odontomachus monticola (Trap-jaw ant)).